We begin with the raw amino-acid sequence, 352 residues long: Farnesyl pyrophosphate synthase (352 aa).

Positions 52, 55, and 93 each coordinate isopentenyl diphosphate. Mg(2+)-binding residues include D100 and D104. R109 is a binding site for dimethylallyl diphosphate. An isopentenyl diphosphate-binding site is contributed by R110. K197, T198, Q237, K254, and K263 together coordinate dimethylallyl diphosphate.

The protein belongs to the FPP/GGPP synthase family. The cofactor is Mg(2+).

It catalyses the reaction isopentenyl diphosphate + dimethylallyl diphosphate = (2E)-geranyl diphosphate + diphosphate. The catalysed reaction is isopentenyl diphosphate + (2E)-geranyl diphosphate = (2E,6E)-farnesyl diphosphate + diphosphate. Its pathway is isoprenoid biosynthesis; farnesyl diphosphate biosynthesis; farnesyl diphosphate from geranyl diphosphate and isopentenyl diphosphate: step 1/1. It functions in the pathway isoprenoid biosynthesis; geranyl diphosphate biosynthesis; geranyl diphosphate from dimethylallyl diphosphate and isopentenyl diphosphate: step 1/1. Functionally, farnesyl pyrophosphate synthase; part of the second module of ergosterol biosynthesis pathway that includes the middle steps of the pathway. ERG20 catalyzes the sequential condensation of isopentenyl pyrophosphate with dimethylallyl pyrophosphate, and then with the resultant geranylpyrophosphate to the ultimate product farnesyl pyrophosphate. The second module is carried out in the vacuole and involves the formation of farnesyl diphosphate, which is also an important intermediate in the biosynthesis of ubiquinone, dolichol, heme and prenylated proteins. Activity by the mevalonate kinase ERG12 first converts mevalonate into 5-phosphomevalonate. 5-phosphomevalonate is then further converted to 5-diphosphomevalonate by the phosphomevalonate kinase ERG8. The diphosphomevalonate decarboxylase MVD1/ERG19 then produces isopentenyl diphosphate. The isopentenyl-diphosphate delta-isomerase IDI1 then catalyzes the 1,3-allylic rearrangement of the homoallylic substrate isopentenyl (IPP) to its highly electrophilic allylic isomer, dimethylallyl diphosphate (DMAPP). Finally the farnesyl diphosphate synthase ERG20 catalyzes the sequential condensation of isopentenyl pyrophosphate with dimethylallyl pyrophosphate, and then with the resultant geranylpyrophosphate to the ultimate product farnesyl pyrophosphate. This Saccharomyces cerevisiae (strain ATCC 204508 / S288c) (Baker's yeast) protein is Farnesyl pyrophosphate synthase (ERG20).